The primary structure comprises 85 residues: DNA-directed RNA polymerase subunit omega (85 aa).

It belongs to the RNA polymerase subunit omega family. As to quaternary structure, the RNAP catalytic core consists of 2 alpha, 1 beta, 1 beta' and 1 omega subunit. When a sigma factor is associated with the core the holoenzyme is formed, which can initiate transcription.

The catalysed reaction is RNA(n) + a ribonucleoside 5'-triphosphate = RNA(n+1) + diphosphate. Promotes RNA polymerase assembly. Latches the N- and C-terminal regions of the beta' subunit thereby facilitating its interaction with the beta and alpha subunits. The polypeptide is DNA-directed RNA polymerase subunit omega (Tropheryma whipplei (strain TW08/27) (Whipple's bacillus)).